The primary structure comprises 1067 residues: MFRSRSWFGGPWGGRPKNRLSLEHLKYLYSILEKNTTVSESNRGLLVESLRCIAEILIWGDQHDSLVFDFFLEKNMLSYFLHIMRQKSGGSSFVCVQLLQTLNILFENIRNETSLYYLLSNNHVNSIMVHKFDFSDEDVMGYYILFLKTLSLKLNTHTIHFFYNEHTNDFPLYTEAIKFFNHPESMVRIAVRTISLNVYKVQNPSMLRFIRDKTAAPYFSNLVWFIGKHILELDTCVRTDIDHQSNQKLSNLVAEHLDHLHYLSDILLLEIKDLNAVLTEHLLHKLFVPLYIFSLTPAPPPPSLAVVTQNLAAVLNRNVDIDIQEMHNPRVSSIVALFLLSLVFLVVSHAPLVHALAWVILNGDHSVFKEGAAEILNSYVEHREVVVPGFGEPDESLEQALDTVTGQSSSSSYALSEDSGVESSSPATTELDSQADAVEAEQIKLRNITDEEKQLLQKSSSSTKADFAEMAKPFLDTVLHALDCTENDYLALLSLCLIYAMSHNRGIKNEWFEQVLAKSTRGAFSYKTALIEHLLNIITQSSQPSSRIRLITVEIALELLVTFTRPSSDDSRCITAAQQDLLFSARNQSMVVIRNFYKSEDIFLDLFEDEYNEMRKAQLNVEFLCMDSTILLPPTGTPLTGINFTRRLPCGEVEKARRAIRVYFLLRRTCQKFLNEKESLLPLTNVVNLVQVENVLDLNNSDLIACTVVAKDSSKQRRFLVIDALQLILVEPDAKLLGWGVAKFVGFLQDVEVQGDKDDSRCLHITVHRGGVTHNRTPLLSAKFLFDDHIRCMAAKQRLTKGRSKARQKKMYQIAQLIEIPGQMDSPVYAVGGTMVASSSGGSGNSSGSSSRSSHHRPMFSTANRVPGFAAVLRGSNSAGVSRTQMAPNRSIEGIRNESAGRSRRRSPSSTSGSNLRADHSDRERSPSVSMGSHSSSQSRENSQPRSTGNRSRESSPRMPRPRSEEIPLEDFQHSRNNSPHSRGNPSPASRSHTPIRVLHYDQLSGHSGSPREASLGGTNALLSQLNGLNREVLPTQSSEETSFIGSDGNEATGGSEGRRRGAIETV.

Residues 50 to 199 (LRCIAEILIW…AVRTISLNVY (150 aa)) enclose the FPL domain. The chain crosses the membrane as a helical span at residues 333–353 (SIVALFLLSLVFLVVSHAPLV). Residues 409-418 (SSSSYALSED) show a composition bias toward low complexity. 4 disordered regions span residues 409-434 (SSSSYALSEDSGVESSSPATTELDSQ), 837-861 (ASSSGGSGNSSGSSSRSSHHRPMFS), 876-993 (SNSA…SRSH), and 1037-1067 (QSSEETSFIGSDGNEATGGSEGRRRGAIETV). The segment covering 421 to 432 (VESSSPATTELD) has biased composition (polar residues). The span at 876–888 (SNSAGVSRTQMAP) shows a compositional bias: polar residues. Residues 917-926 (RADHSDRERS) are compositionally biased toward basic and acidic residues. Residues 927–947 (PSVSMGSHSSSQSRENSQPRS) show a composition bias toward low complexity. Over residues 951-974 (RSRESSPRMPRPRSEEIPLEDFQH) the composition is skewed to basic and acidic residues. Residues 975-993 (SRNNSPHSRGNPSPASRSH) are compositionally biased toward polar residues. The span at 1057 to 1067 (EGRRRGAIETV) shows a compositional bias: basic and acidic residues.

It belongs to the CLEC16A/gop-1 family. Interacts with the class C Vps-HOPS complex components; Car, Dor and Vps16a.

It localises to the cytoplasmic vesicle. It is found in the autophagosome membrane. The protein resides in the late endosome membrane. Its subcellular location is the golgi apparatus membrane. In terms of biological role, required for mitophagy, autophagy and endosome maturation, possibly by acting in multiple membrane trafficking pathways. Required for endosome trafficking and maturation. Functions with the class C Vps-HOPS complex member Vps16a to promote endosomal maturation into degradative late endosomes and lysosomes. In response to starvation, functions at an early stage of autophagy to promote autophagosome growth and efficient autophagy. Essential for the recruitment of lva-positive Golgi elements to autophagosomes. Likely to function by promoting membrane traffic from the Golgi complex to the developing autophagosomes. Also regulates synaptic growth at the neuromuscular junctions (NMJ) by down-regulating BMP signaling. In Drosophila melanogaster (Fruit fly), this protein is Protein CLEC16A homolog.